The primary structure comprises 670 residues: DNA ligase (670 aa).

Residues aspartate 32–aspartate 36, serine 81–leucine 82, and glutamate 113 contribute to the NAD(+) site. The active-site N6-AMP-lysine intermediate is lysine 115. NAD(+) is bound by residues arginine 136, glutamate 173, lysine 290, and lysine 314. The Zn(2+) site is built by cysteine 408, cysteine 411, cysteine 426, and cysteine 432. A BRCT domain is found at glutamate 592–glutamate 670.

Belongs to the NAD-dependent DNA ligase family. LigA subfamily. The cofactor is Mg(2+). Requires Mn(2+) as cofactor.

The enzyme catalyses NAD(+) + (deoxyribonucleotide)n-3'-hydroxyl + 5'-phospho-(deoxyribonucleotide)m = (deoxyribonucleotide)n+m + AMP + beta-nicotinamide D-nucleotide.. Its function is as follows. DNA ligase that catalyzes the formation of phosphodiester linkages between 5'-phosphoryl and 3'-hydroxyl groups in double-stranded DNA using NAD as a coenzyme and as the energy source for the reaction. It is essential for DNA replication and repair of damaged DNA. The sequence is that of DNA ligase from Yersinia pseudotuberculosis serotype IB (strain PB1/+).